We begin with the raw amino-acid sequence, 190 residues long: MNEITDKNLPTLERATLGGGCFWCLEAVYQQIQGVKSVVSGYAGGARPNPSYESVCTGATGHAEIVDIEFDPKVVSFRDLLEIFFVIHNPTTLNYQGNDHGTQYRSVIYTHSDEQAKIANEVVQELEDSKIYADPVVTQIESAPTIYPAEDYHQNYFQQHPHQGYCAAVVAPKLAKFRAKFKSLIAPQYA.

Cys21 is a catalytic residue.

This sequence belongs to the MsrA Met sulfoxide reductase family.

It catalyses the reaction L-methionyl-[protein] + [thioredoxin]-disulfide + H2O = L-methionyl-(S)-S-oxide-[protein] + [thioredoxin]-dithiol. The enzyme catalyses [thioredoxin]-disulfide + L-methionine + H2O = L-methionine (S)-S-oxide + [thioredoxin]-dithiol. Functionally, has an important function as a repair enzyme for proteins that have been inactivated by oxidation. Catalyzes the reversible oxidation-reduction of methionine sulfoxide in proteins to methionine. The chain is Peptide methionine sulfoxide reductase MsrA from Polynucleobacter asymbioticus (strain DSM 18221 / CIP 109841 / QLW-P1DMWA-1) (Polynucleobacter necessarius subsp. asymbioticus).